Here is a 226-residue protein sequence, read N- to C-terminus: NAD(P)H-quinone oxidoreductase subunit K, chloroplastic (226 aa).

Positions 43, 44, 108, and 139 each coordinate [4Fe-4S] cluster.

The protein belongs to the complex I 20 kDa subunit family. As to quaternary structure, NDH is composed of at least 16 different subunits, 5 of which are encoded in the nucleus. [4Fe-4S] cluster serves as cofactor.

The protein localises to the plastid. The protein resides in the chloroplast thylakoid membrane. The catalysed reaction is a plastoquinone + NADH + (n+1) H(+)(in) = a plastoquinol + NAD(+) + n H(+)(out). It carries out the reaction a plastoquinone + NADPH + (n+1) H(+)(in) = a plastoquinol + NADP(+) + n H(+)(out). In terms of biological role, NDH shuttles electrons from NAD(P)H:plastoquinone, via FMN and iron-sulfur (Fe-S) centers, to quinones in the photosynthetic chain and possibly in a chloroplast respiratory chain. The immediate electron acceptor for the enzyme in this species is believed to be plastoquinone. Couples the redox reaction to proton translocation, and thus conserves the redox energy in a proton gradient. This chain is NAD(P)H-quinone oxidoreductase subunit K, chloroplastic, found in Lupinus luteus (European yellow lupine).